Consider the following 71-residue polypeptide: Small ribosomal subunit protein bS21 (71 aa).

The tract at residues 39–71 is disordered; that stretch reads EKPTQERKRKAAAAVKRQMRRTSRDVTKRKRLY. A compositionally biased stretch (basic residues) spans 45–71; it reads RKRKAAAAVKRQMRRTSRDVTKRKRLY.

Belongs to the bacterial ribosomal protein bS21 family.

The protein is Small ribosomal subunit protein bS21 of Xylella fastidiosa (strain M12).